We begin with the raw amino-acid sequence, 347 residues long: Tryptophan--tRNA ligase (347 aa).

Residues Q10 to S12 and G18 to N19 contribute to the ATP site. The 'HIGH' region signature appears at A11–N19. Position 140 (D140) interacts with L-tryptophan. ATP contacts are provided by residues G152–D154, I191, and K200–S204. The 'KMSKS' region motif lies at K200–S204.

It belongs to the class-I aminoacyl-tRNA synthetase family. In terms of assembly, homodimer.

It is found in the cytoplasm. The catalysed reaction is tRNA(Trp) + L-tryptophan + ATP = L-tryptophyl-tRNA(Trp) + AMP + diphosphate + H(+). Functionally, catalyzes the attachment of tryptophan to tRNA(Trp). The polypeptide is Tryptophan--tRNA ligase (Mycoplasma genitalium (strain ATCC 33530 / DSM 19775 / NCTC 10195 / G37) (Mycoplasmoides genitalium)).